Consider the following 241-residue polypeptide: Triosephosphate isomerase (241 aa).

Substrate is bound at residue 9 to 11; that stretch reads NWK. Catalysis depends on His-96, which acts as the Electrophile. Glu-165 (proton acceptor) is an active-site residue. Substrate is bound by residues Gly-171, Ser-204, and 225–226; that span reads GG.

The protein belongs to the triosephosphate isomerase family. As to quaternary structure, homodimer.

The protein resides in the cytoplasm. It carries out the reaction D-glyceraldehyde 3-phosphate = dihydroxyacetone phosphate. It participates in carbohydrate biosynthesis; gluconeogenesis. The protein operates within carbohydrate degradation; glycolysis; D-glyceraldehyde 3-phosphate from glycerone phosphate: step 1/1. Functionally, involved in the gluconeogenesis. Catalyzes stereospecifically the conversion of dihydroxyacetone phosphate (DHAP) to D-glyceraldehyde-3-phosphate (G3P). This Trichormus variabilis (strain ATCC 29413 / PCC 7937) (Anabaena variabilis) protein is Triosephosphate isomerase.